Here is a 675-residue protein sequence, read N- to C-terminus: DNA ligase (675 aa).

Residues D32–D36, S81–L82, and E113 contribute to the NAD(+) site. Catalysis depends on K115, which acts as the N6-AMP-lysine intermediate. Residues R136, E173, K291, and K315 each contribute to the NAD(+) site. Zn(2+)-binding residues include C409, C412, C427, and C433. A BRCT domain is found at S595–E675.

The protein belongs to the NAD-dependent DNA ligase family. LigA subfamily. Requires Mg(2+) as cofactor. Mn(2+) serves as cofactor.

The catalysed reaction is NAD(+) + (deoxyribonucleotide)n-3'-hydroxyl + 5'-phospho-(deoxyribonucleotide)m = (deoxyribonucleotide)n+m + AMP + beta-nicotinamide D-nucleotide.. Functionally, DNA ligase that catalyzes the formation of phosphodiester linkages between 5'-phosphoryl and 3'-hydroxyl groups in double-stranded DNA using NAD as a coenzyme and as the energy source for the reaction. It is essential for DNA replication and repair of damaged DNA. The chain is DNA ligase from Buchnera aphidicola subsp. Acyrthosiphon pisum (strain APS) (Acyrthosiphon pisum symbiotic bacterium).